A 155-amino-acid chain; its full sequence is Small ribosomal subunit protein uS7c (155 aa).

Belongs to the universal ribosomal protein uS7 family. As to quaternary structure, part of the 30S ribosomal subunit.

The protein localises to the plastid. The protein resides in the chloroplast. In terms of biological role, one of the primary rRNA binding proteins, it binds directly to 16S rRNA where it nucleates assembly of the head domain of the 30S subunit. The chain is Small ribosomal subunit protein uS7c (rps7) from Yucca glauca (Soapweed yucca).